The following is a 274-amino-acid chain: 4-hydroxy-tetrahydrodipicolinate reductase (274 aa).

An NAD(+)-binding site is contributed by 7-12; that stretch reads GVTGRM. NADP(+) is bound at residue R40. Residues 103–105 and 127–130 each bind NAD(+); these read GTT and SANF. H160 (proton donor/acceptor) is an active-site residue. H161 serves as a coordination point for (S)-2,3,4,5-tetrahydrodipicolinate. K164 functions as the Proton donor in the catalytic mechanism. 170–171 lines the (S)-2,3,4,5-tetrahydrodipicolinate pocket; sequence GT.

It belongs to the DapB family. As to quaternary structure, homotetramer.

It localises to the cytoplasm. It carries out the reaction (S)-2,3,4,5-tetrahydrodipicolinate + NAD(+) + H2O = (2S,4S)-4-hydroxy-2,3,4,5-tetrahydrodipicolinate + NADH + H(+). It catalyses the reaction (S)-2,3,4,5-tetrahydrodipicolinate + NADP(+) + H2O = (2S,4S)-4-hydroxy-2,3,4,5-tetrahydrodipicolinate + NADPH + H(+). Its pathway is amino-acid biosynthesis; L-lysine biosynthesis via DAP pathway; (S)-tetrahydrodipicolinate from L-aspartate: step 4/4. Catalyzes the conversion of 4-hydroxy-tetrahydrodipicolinate (HTPA) to tetrahydrodipicolinate. In Blochmanniella floridana, this protein is 4-hydroxy-tetrahydrodipicolinate reductase.